A 65-amino-acid chain; its full sequence is Large ribosomal subunit protein bL33 (65 aa).

Residues A20 to T42 are disordered.

Belongs to the bacterial ribosomal protein bL33 family.

This is Large ribosomal subunit protein bL33 from Prochlorococcus marinus (strain SARG / CCMP1375 / SS120).